The following is a 783-amino-acid chain: Tricorn protease-interacting factor F2 (783 aa).

Substrate contacts are provided by residues Glu-107 and 236-240 (GAMEN). His-271 is a binding site for Zn(2+). Glu-272 serves as the catalytic Proton acceptor. The Zn(2+) site is built by His-275 and Glu-294.

The protein belongs to the peptidase M1 family. In terms of assembly, monomer. Part of the Tricorn proteolytic complex. Requires Zn(2+) as cofactor.

Its subcellular location is the cytoplasm. Functionally, proteases F1, F2 and F3 degrade oligopeptides produced by Tricorn (themselves probably produced by the proteasome), yielding free amino acids. The chain is Tricorn protease-interacting factor F2 (trf2) from Thermoplasma volcanium (strain ATCC 51530 / DSM 4299 / JCM 9571 / NBRC 15438 / GSS1).